We begin with the raw amino-acid sequence, 429 residues long: 3-phosphoshikimate 1-carboxyvinyltransferase (429 aa).

The 3-phosphoshikimate site is built by Lys20, Ser21, and Arg25. Position 20 (Lys20) interacts with phosphoenolpyruvate. Residues Gly89 and Arg118 each coordinate phosphoenolpyruvate. 3-phosphoshikimate-binding residues include Ser164, Ser165, Gln166, Ser192, Asp311, and Lys338. A phosphoenolpyruvate-binding site is contributed by Gln166. The Proton acceptor role is filled by Asp311. Phosphoenolpyruvate-binding residues include Arg342 and Arg384.

This sequence belongs to the EPSP synthase family. In terms of assembly, monomer.

It is found in the cytoplasm. The enzyme catalyses 3-phosphoshikimate + phosphoenolpyruvate = 5-O-(1-carboxyvinyl)-3-phosphoshikimate + phosphate. Its pathway is metabolic intermediate biosynthesis; chorismate biosynthesis. Its function is as follows. Catalyzes the transfer of the enolpyruvyl moiety of phosphoenolpyruvate (PEP) to the 5-hydroxyl of shikimate-3-phosphate (S3P) to produce enolpyruvyl shikimate-3-phosphate and inorganic phosphate. This Methanococcus maripaludis (strain DSM 14266 / JCM 13030 / NBRC 101832 / S2 / LL) protein is 3-phosphoshikimate 1-carboxyvinyltransferase.